Reading from the N-terminus, the 252-residue chain is Small ribosomal subunit protein eS1 (252 aa).

This sequence belongs to the eukaryotic ribosomal protein eS1 family. In terms of assembly, component of the small ribosomal subunit. Mature ribosomes consist of a small (40S) and a large (60S) subunit. The 40S subunit contains about 33 different proteins and 1 molecule of RNA (18S). The 60S subunit contains about 49 different proteins and 3 molecules of RNA (25S, 5.8S and 5S).

The protein localises to the cytoplasm. This is Small ribosomal subunit protein eS1 from Enterocytozoon bieneusi (strain H348) (Microsporidian parasite).